The primary structure comprises 891 residues: UPF0182 protein Glov_0814 (891 aa).

7 helical membrane passes run 6–26 (LTPILFALFIIVPALTYLLAY), 51–71 (GIGVLFGGLLFAFLVPNLLYA), 102–122 (IGVLIAAGIALFVGQFGALQW), 164–184 (FMLLATLLVTLLVYYIRGGIA), 202–222 (ILLALFSCVIAAGFYLEGFGL), 244–264 (TLTTLAFITPVAGLLLAFGLW), and 266–286 (GTWRLVLLPPIVVVAAYMIGM).

The protein belongs to the UPF0182 family.

Its subcellular location is the cell membrane. The sequence is that of UPF0182 protein Glov_0814 from Trichlorobacter lovleyi (strain ATCC BAA-1151 / DSM 17278 / SZ) (Geobacter lovleyi).